A 329-amino-acid chain; its full sequence is Ferredoxin--NADP reductase (329 aa).

Positions 28, 36, 41, 81, 115, 282, and 323 each coordinate FAD.

It belongs to the ferredoxin--NADP reductase type 2 family. Homodimer. FAD is required as a cofactor.

It catalyses the reaction 2 reduced [2Fe-2S]-[ferredoxin] + NADP(+) + H(+) = 2 oxidized [2Fe-2S]-[ferredoxin] + NADPH. In Anaplasma marginale (strain St. Maries), this protein is Ferredoxin--NADP reductase.